A 214-amino-acid polypeptide reads, in one-letter code: Large ribosomal subunit protein uL3 (214 aa).

The interval 131–153 is disordered; the sequence is KSQRASHGNSRSHNVPGSIGMAQ. The span at 132–145 shows a compositional bias: polar residues; that stretch reads SQRASHGNSRSHNV. Gln153 carries the N5-methylglutamine modification.

The protein belongs to the universal ribosomal protein uL3 family. As to quaternary structure, part of the 50S ribosomal subunit. Forms a cluster with proteins L14 and L19. In terms of processing, methylated by PrmB.

In terms of biological role, one of the primary rRNA binding proteins, it binds directly near the 3'-end of the 23S rRNA, where it nucleates assembly of the 50S subunit. This is Large ribosomal subunit protein uL3 from Thiobacillus denitrificans (strain ATCC 25259 / T1).